The following is a 369-amino-acid chain: Queuine tRNA-ribosyltransferase (369 aa).

The active-site Proton acceptor is the Asp89. Residues 89 to 93 (DSGGF), Asp142, Gln184, and Gly211 each bind substrate. Positions 242–248 (GGGSPEL) are RNA binding. Asp261 acts as the Nucleophile in catalysis. The tract at residues 266-270 (TRIAR) is RNA binding; important for wobble base 34 recognition. Zn(2+) is bound by residues Cys299, Cys301, Cys304, and His330.

This sequence belongs to the queuine tRNA-ribosyltransferase family. As to quaternary structure, homodimer. Within each dimer, one monomer is responsible for RNA recognition and catalysis, while the other monomer binds to the replacement base PreQ1. Zn(2+) is required as a cofactor.

The enzyme catalyses 7-aminomethyl-7-carbaguanine + guanosine(34) in tRNA = 7-aminomethyl-7-carbaguanosine(34) in tRNA + guanine. It functions in the pathway tRNA modification; tRNA-queuosine biosynthesis. Its function is as follows. Catalyzes the base-exchange of a guanine (G) residue with the queuine precursor 7-aminomethyl-7-deazaguanine (PreQ1) at position 34 (anticodon wobble position) in tRNAs with GU(N) anticodons (tRNA-Asp, -Asn, -His and -Tyr). Catalysis occurs through a double-displacement mechanism. The nucleophile active site attacks the C1' of nucleotide 34 to detach the guanine base from the RNA, forming a covalent enzyme-RNA intermediate. The proton acceptor active site deprotonates the incoming PreQ1, allowing a nucleophilic attack on the C1' of the ribose to form the product. After dissociation, two additional enzymatic reactions on the tRNA convert PreQ1 to queuine (Q), resulting in the hypermodified nucleoside queuosine (7-(((4,5-cis-dihydroxy-2-cyclopenten-1-yl)amino)methyl)-7-deazaguanosine). The polypeptide is Queuine tRNA-ribosyltransferase (Thermotoga sp. (strain RQ2)).